Reading from the N-terminus, the 297-residue chain is ATP synthase gamma chain (297 aa).

The protein belongs to the ATPase gamma chain family. As to quaternary structure, F-type ATPases have 2 components, CF(1) - the catalytic core - and CF(0) - the membrane proton channel. CF(1) has five subunits: alpha(3), beta(3), gamma(1), delta(1), epsilon(1). CF(0) has three main subunits: a, b and c.

It is found in the cell membrane. Produces ATP from ADP in the presence of a proton gradient across the membrane. The gamma chain is believed to be important in regulating ATPase activity and the flow of protons through the CF(0) complex. This chain is ATP synthase gamma chain, found in Arthrobacter sp. (strain FB24).